The sequence spans 111 residues: Nucleoid-associated protein glr3498 (111 aa).

Belongs to the YbaB/EbfC family. In terms of assembly, homodimer.

Its subcellular location is the cytoplasm. It is found in the nucleoid. Functionally, binds to DNA and alters its conformation. May be involved in regulation of gene expression, nucleoid organization and DNA protection. The protein is Nucleoid-associated protein glr3498 of Gloeobacter violaceus (strain ATCC 29082 / PCC 7421).